We begin with the raw amino-acid sequence, 1012 residues long: Klotho (1012 aa).

Positions 1-33 (MPASAPPRRPRPPPPSLSLLLVLLGLGGRRLRA) are cleaved as a signal peptide. Over 34-981 (EPGDGAQTWA…ECSFFHTRKS (948 aa)) the chain is Extracellular. Glycosyl hydrolase-1 stretches follow at residues 57-506 (FQGT…KNGF) and 515-953 (LEGT…SNGF). N-linked (GlcNAc...) asparagine glycosylation is found at Asn-106, Asn-159, Asn-283, Asn-344, Asn-607, Asn-612, and Asn-694. The chain crosses the membrane as a helical span at residues 982–1002 (LLAFIAFLFFASIISLSLIFY). Residues 1003–1012 (YSKKGRRSYK) are Cytoplasmic-facing.

The protein belongs to the glycosyl hydrolase 1 family. Klotho subfamily. In terms of assembly, homodimer. Interacts with FGF23 and FGFR1. N-glycosylated. Present in cortical renal tubules (at protein level). Soluble peptide is present in serum and cerebrospinal fluid. Expressed in kidney, placenta, small intestine and prostate. Down-regulated in renal cell carcinomas, hepatocellular carcinomas, and in chronic renal failure kidney.

It localises to the cell membrane. Its subcellular location is the apical cell membrane. The protein resides in the secreted. The enzyme catalyses a beta-D-glucuronoside + H2O = D-glucuronate + an alcohol. In terms of biological role, may have weak glycosidase activity towards glucuronylated steroids. However, it lacks essential active site Glu residues at positions 239 and 872, suggesting it may be inactive as a glycosidase in vivo. May be involved in the regulation of calcium and phosphorus homeostasis by inhibiting the synthesis of active vitamin D. Essential factor for the specific interaction between FGF23 and FGFR1. Functionally, the Klotho peptide generated by cleavage of the membrane-bound isoform may be an anti-aging circulating hormone which would extend life span by inhibiting insulin/IGF1 signaling. This chain is Klotho (KL), found in Homo sapiens (Human).